Here is a 261-residue protein sequence, read N- to C-terminus: Small ribosomal subunit protein eS1 (261 aa).

A compositionally biased stretch (basic residues) spans 1–18 (MAVGKNKRISKGKKGGKK). The interval 1-21 (MAVGKNKRISKGKKGGKKKAT) is disordered.

Belongs to the eukaryotic ribosomal protein eS1 family. As to quaternary structure, component of the small ribosomal subunit. Mature ribosomes consist of a small (40S) and a large (60S) subunit. The 40S subunit contains about 33 different proteins and 1 molecule of RNA (18S). The 60S subunit contains about 49 different proteins and 3 molecules of RNA (25S, 5.8S and 5S).

It is found in the cytoplasm. The sequence is that of Small ribosomal subunit protein eS1 (cyc07) from Daucus carota (Wild carrot).